Consider the following 131-residue polypeptide: PMILLALGLLADTDIASLFTAITMDIGMCVTGLAAALITSSHLLRWVFYGISCAFFVAVLYVLLVQWPADAEAAGTSEIFGTLKILTVVLWLGYPILWALGSEGVALLSVGVTSWGYSGLDILAKYVFAFI.

The chain crosses the membrane as a helical span at residues 1–11; that stretch reads PMILLALGLLA. The Cytoplasmic portion of the chain corresponds to 12 to 14; it reads DTD. The helical transmembrane segment at 15-38 threads the bilayer; the sequence is IASLFTAITMDIGMCVTGLAAALI. Residues 39-41 lie on the Extracellular side of the membrane; the sequence is TSS. The helical transmembrane segment at 42-64 threads the bilayer; it reads HLLRWVFYGISCAFFVAVLYVLL. Residues 65 to 76 lie on the Cytoplasmic side of the membrane; that stretch reads VQWPADAEAAGT. Residues 77–100 form a helical membrane-spanning segment; it reads SEIFGTLKILTVVLWLGYPILWAL. Residues 101–109 lie on the Extracellular side of the membrane; that stretch reads GSEGVALLS. The helical transmembrane segment at 110–131 threads the bilayer; sequence VGVTSWGYSGLDILAKYVFAFI. K125 is modified (N6-(retinylidene)lysine).

It belongs to the archaeal/bacterial/fungal opsin family.

The protein resides in the cell membrane. Its function is as follows. Light-driven chloride pump. The polypeptide is Cruxhalorhodopsin-1 (choP1) (Haloarcula argentinensis).